A 225-amino-acid chain; its full sequence is Enolase-phosphatase E1 (225 aa).

Belongs to the HAD-like hydrolase superfamily. MasA/MtnC family. In terms of assembly, monomer. Mg(2+) is required as a cofactor.

The enzyme catalyses 5-methylsulfanyl-2,3-dioxopentyl phosphate + H2O = 1,2-dihydroxy-5-(methylsulfanyl)pent-1-en-3-one + phosphate. It functions in the pathway amino-acid biosynthesis; L-methionine biosynthesis via salvage pathway; L-methionine from S-methyl-5-thio-alpha-D-ribose 1-phosphate: step 3/6. It participates in amino-acid biosynthesis; L-methionine biosynthesis via salvage pathway; L-methionine from S-methyl-5-thio-alpha-D-ribose 1-phosphate: step 4/6. Its function is as follows. Bifunctional enzyme that catalyzes the enolization of 2,3-diketo-5-methylthiopentyl-1-phosphate (DK-MTP-1-P) into the intermediate 2-hydroxy-3-keto-5-methylthiopentenyl-1-phosphate (HK-MTPenyl-1-P), which is then dephosphorylated to form the acireductone 1,2-dihydroxy-3-keto-5-methylthiopentene (DHK-MTPene). This Shewanella woodyi (strain ATCC 51908 / MS32) protein is Enolase-phosphatase E1.